The chain runs to 306 residues: tRNA dimethylallyltransferase 1 (306 aa).

13 to 20 (GPTASGKT) is an ATP binding site. Position 15-20 (15-20 (TASGKT)) interacts with substrate. The tract at residues 38–41 (DSRQ) is interaction with substrate tRNA.

Belongs to the IPP transferase family. As to quaternary structure, monomer. It depends on Mg(2+) as a cofactor.

The enzyme catalyses adenosine(37) in tRNA + dimethylallyl diphosphate = N(6)-dimethylallyladenosine(37) in tRNA + diphosphate. Its function is as follows. Catalyzes the transfer of a dimethylallyl group onto the adenine at position 37 in tRNAs that read codons beginning with uridine, leading to the formation of N6-(dimethylallyl)adenosine (i(6)A). This chain is tRNA dimethylallyltransferase 1, found in Azobacteroides pseudotrichonymphae genomovar. CFP2.